A 290-amino-acid chain; its full sequence is Diaminopimelate epimerase (290 aa).

Residues Asn-14 and Asn-67 each coordinate substrate. Residue Cys-76 is the Proton donor of the active site. Substrate-binding positions include 77 to 78 (GN), Asn-166, Asn-199, and 217 to 218 (ER). Cys-226 acts as the Proton acceptor in catalysis. 227–228 (GT) contributes to the substrate binding site.

It belongs to the diaminopimelate epimerase family. As to quaternary structure, homodimer.

Its subcellular location is the cytoplasm. It carries out the reaction (2S,6S)-2,6-diaminopimelate = meso-2,6-diaminopimelate. Its pathway is amino-acid biosynthesis; L-lysine biosynthesis via DAP pathway; DL-2,6-diaminopimelate from LL-2,6-diaminopimelate: step 1/1. Catalyzes the stereoinversion of LL-2,6-diaminopimelate (L,L-DAP) to meso-diaminopimelate (meso-DAP), a precursor of L-lysine and an essential component of the bacterial peptidoglycan. This is Diaminopimelate epimerase from Geobacillus thermodenitrificans (strain NG80-2).